Consider the following 203-residue polypeptide: Probable NADPH:quinone oxidoreductase 2 (203 aa).

Belongs to the SsuE family. In terms of assembly, homotetramer. It depends on FMN as a cofactor.

It catalyses the reaction a quinone + NADH + H(+) = a quinol + NAD(+). It carries out the reaction a quinone + NADPH + H(+) = a quinol + NADP(+). Its function is as follows. The enzyme apparently serves as a quinone reductase in connection with conjugation reactions of hydroquinones involved in detoxification pathways. This Oryza sativa subsp. japonica (Rice) protein is Probable NADPH:quinone oxidoreductase 2.